The primary structure comprises 161 residues: MARQKKYSGKGGARKKNKQKQNVAPRRRVEFKYKGFSLEELQEMPIKKFMEIVPSRQRRTMARGITPKQRKLVMKIKKARRLTNRGKDARVIRTHCRDFVITPEMIGLTFGIYNGKEFKEIKLVEETVGRFLGEMAPTRGVVQHGSPGMGATRGSMFVPIK.

A compositionally biased stretch (basic residues) spans 1–19 (MARQKKYSGKGGARKKNKQ). A disordered region spans residues 1–26 (MARQKKYSGKGGARKKNKQKQNVAPR).

This sequence belongs to the universal ribosomal protein uS19 family.

In terms of biological role, protein S19 forms a complex with S13 that binds strongly to the 16S ribosomal RNA. The protein is Small ribosomal subunit protein uS19 of Methanococcus maripaludis (strain DSM 14266 / JCM 13030 / NBRC 101832 / S2 / LL).